We begin with the raw amino-acid sequence, 256 residues long: Putative bidirectional sugar transporter SWEET7e (256 aa).

Residues 1-9 (MVSPDLIRN) lie on the Extracellular side of the membrane. The chain crosses the membrane as a helical span at residues 10-30 (VVGIVGNAISFGLFLSPVLTF). The MtN3/slv 1 domain maps to 10–97 (VVGIVGNAIS…TIFFLFSNKK (88 aa)). The Cytoplasmic segment spans residues 31 to 45 (WRIIKEKDMKYFKAD). A helical transmembrane segment spans residues 46–66 (PYLATLLNCMLWVFYGLPIVH). The Extracellular segment spans residues 67–69 (PNS). Residues 70 to 90 (ILVVTINGIGLVIEAVYLTIF) traverse the membrane as a helical segment. The Cytoplasmic segment spans residues 91–100 (FLFSNKKNKK). Residues 101-121 (MGVVLATEALFMAAVALGVLL) traverse the membrane as a helical segment. Over 122–130 (GAHTHQRRS) the chain is Extracellular. Residues 131-151 (LIVGILCVIFGTIMYSSPLTI) traverse the membrane as a helical segment. A MtN3/slv 2 domain is found at 133-212 (VGILCVIFGT…LMQLILDKNQ (80 aa)). At 152-164 (MSQVVKTKSVEYM) the chain is on the cytoplasmic side. A helical membrane pass occupies residues 165 to 185 (PLLLSVVSFLNGLCWTSYALI). Arginine 186 is a topological domain (extracellular). The helical transmembrane segment at 187–207 (FDIFITIPNGLGVLFTLMQLI) threads the bilayer. Over 208 to 256 (LDKNQDKNLELPTVAPVAKETSIVTPVSKDDDINGSTASHVIINITKEP) the chain is Cytoplasmic.

It belongs to the SWEET sugar transporter family. Forms homooligomers and/or heterooligomers.

Its subcellular location is the cell membrane. Its function is as follows. Mediates both low-affinity uptake and efflux of sugar across the plasma membrane. The polypeptide is Putative bidirectional sugar transporter SWEET7e (SWEET7E) (Oryza sativa subsp. japonica (Rice)).